The following is a 1406-amino-acid chain: Receptor-type tyrosine-protein phosphatase eta (1406 aa).

The first 24 residues, 1–24, serve as a signal peptide directing secretion; it reads MRRLPLLPPCPLLLLLLLPAEVRC. The Extracellular portion of the chain corresponds to 25–1044; it reads TTACTDDCSL…LPQDPGVIAG (1020 aa). N-linked (GlcNAc...) asparagine glycans are attached at residues asparagine 36, asparagine 52, asparagine 97, asparagine 103, asparagine 118, asparagine 124, asparagine 186, asparagine 192, asparagine 243, asparagine 275, asparagine 281, asparagine 296, asparagine 302, asparagine 331, asparagine 332, asparagine 364, asparagine 385, asparagine 391, asparagine 453, asparagine 459, asparagine 484, asparagine 500, asparagine 510, asparagine 547, asparagine 568, asparagine 630, asparagine 636, asparagine 651, asparagine 657, asparagine 719, asparagine 745, asparagine 750, asparagine 766, asparagine 776, asparagine 804, and asparagine 828. A disordered region spans residues 39 to 72; it reads EEMGTSSNDELSVNATSGNRRLSEDVSLPGRAMS. Over residues 41 to 58 the composition is skewed to polar residues; sequence MGTSSNDELSVNATSGNR. Fibronectin type-III domains are found at residues 82 to 170, 171 to 259, 260 to 343, 346 to 437, 438 to 523, 524 to 614, 615 to 703, 704 to 793, 794 to 888, and 887 to 979; these read AVLD…TKPS, PVLD…TKPS, PVLD…SLNL, KPSP…TKPS, PVLD…SLYT, KPTP…TKPR, AVLH…TKPS, MVLN…VPSS, VNAF…TDPP, and PPVP…IVDV. Residue asparagine 1010 is glycosylated (N-linked (GlcNAc...) asparagine). Residues 1045–1065 traverse the membrane as a helical segment; the sequence is AVIGCLLAILAVVAIGGYIFW. Topologically, residues 1066 to 1406 are cytoplasmic; it reads RRRRKDKRNT…AFGKANGYHA (341 aa). Positions 1110–1367 constitute a Tyrosine-protein phosphatase domain; it reads FAEEYEELKS…VFLNQCVMDI (258 aa). Substrate is bound by residues aspartate 1274, 1308–1314, and glutamine 1352; that span reads CSAGVGR. Cysteine 1308 serves as the catalytic Phosphocysteine intermediate.

Belongs to the protein-tyrosine phosphatase family. Receptor class 3 subfamily. Found on the apical surfaces of retinal Mueller cells, renal tubule cells and intestinal brush border cells.

Its subcellular location is the cell membrane. The protein localises to the cell projection. It localises to the ruffle membrane. The protein resides in the cell junction. It carries out the reaction O-phospho-L-tyrosyl-[protein] + H2O = L-tyrosyl-[protein] + phosphate. Tyrosine phosphatase which dephosphorylates or contributes to the dephosphorylation of several substrates. Plays a role in cell adhesion, migration, proliferation and differentiation. Has a role in megakaryocytes and platelet formation. May influence the potential of nonsensory supporting cells to either proliferate or differentiate into hair cells. This Gallus gallus (Chicken) protein is Receptor-type tyrosine-protein phosphatase eta (PTPRJ).